Here is a 271-residue protein sequence, read N- to C-terminus: Regulatory protein RecX (271 aa).

The protein belongs to the RecX family.

It is found in the cytoplasm. Modulates RecA activity. The polypeptide is Regulatory protein RecX (Lactobacillus delbrueckii subsp. bulgaricus (strain ATCC BAA-365 / Lb-18)).